The sequence spans 107 residues: Nitrogenase-stabilizing/protective protein NifW (107 aa).

This sequence belongs to the NifW family. In terms of assembly, homotrimer; associates with NifD.

Its function is as follows. May protect the nitrogenase Fe-Mo protein from oxidative damage. The chain is Nitrogenase-stabilizing/protective protein NifW from Gloeothece citriformis (strain PCC 7424) (Cyanothece sp. (strain PCC 7424)).